We begin with the raw amino-acid sequence, 130 residues long: Small ribosomal subunit protein uS9 (130 aa).

Residues 109–130 are disordered; sequence RVKERKKPGLKKARKARQFSKR. Residues 111 to 130 show a composition bias toward basic residues; that stretch reads KERKKPGLKKARKARQFSKR.

It belongs to the universal ribosomal protein uS9 family.

In Mycoplasma mobile (strain ATCC 43663 / 163K / NCTC 11711) (Mesomycoplasma mobile), this protein is Small ribosomal subunit protein uS9.